The sequence spans 166 residues: ATP synthase subunit b (166 aa).

Residues Leu-10–Phe-30 form a helical membrane-spanning segment.

This sequence belongs to the ATPase B chain family. As to quaternary structure, F-type ATPases have 2 components, F(1) - the catalytic core - and F(0) - the membrane proton channel. F(1) has five subunits: alpha(3), beta(3), gamma(1), delta(1), epsilon(1). F(0) has three main subunits: a(1), b(2) and c(10-14). The alpha and beta chains form an alternating ring which encloses part of the gamma chain. F(1) is attached to F(0) by a central stalk formed by the gamma and epsilon chains, while a peripheral stalk is formed by the delta and b chains.

The protein resides in the cell inner membrane. F(1)F(0) ATP synthase produces ATP from ADP in the presence of a proton or sodium gradient. F-type ATPases consist of two structural domains, F(1) containing the extramembraneous catalytic core and F(0) containing the membrane proton channel, linked together by a central stalk and a peripheral stalk. During catalysis, ATP synthesis in the catalytic domain of F(1) is coupled via a rotary mechanism of the central stalk subunits to proton translocation. Its function is as follows. Component of the F(0) channel, it forms part of the peripheral stalk, linking F(1) to F(0). This is ATP synthase subunit b from Phocaeicola vulgatus (strain ATCC 8482 / DSM 1447 / JCM 5826 / CCUG 4940 / NBRC 14291 / NCTC 11154) (Bacteroides vulgatus).